The chain runs to 428 residues: Enolase (428 aa).

(2R)-2-phosphoglycerate is bound at residue glutamine 163. Residue glutamate 205 is the Proton donor of the active site. Aspartate 242, glutamate 285, and aspartate 312 together coordinate Mg(2+). Residues lysine 337, arginine 366, serine 367, and lysine 388 each contribute to the (2R)-2-phosphoglycerate site. The active-site Proton acceptor is the lysine 337.

The protein belongs to the enolase family. The cofactor is Mg(2+).

The protein localises to the cytoplasm. It localises to the secreted. It is found in the cell surface. It catalyses the reaction (2R)-2-phosphoglycerate = phosphoenolpyruvate + H2O. It functions in the pathway carbohydrate degradation; glycolysis; pyruvate from D-glyceraldehyde 3-phosphate: step 4/5. Functionally, catalyzes the reversible conversion of 2-phosphoglycerate (2-PG) into phosphoenolpyruvate (PEP). It is essential for the degradation of carbohydrates via glycolysis. The sequence is that of Enolase from Neisseria meningitidis serogroup B (strain ATCC BAA-335 / MC58).